The primary structure comprises 179 residues: Peptidyl-tRNA hydrolase 2, mitochondrial (179 aa).

A helical membrane pass occupies residues 15-37 (STLGLAVGVACGMCLGWSLRVCF). Glycyl lysine isopeptide (Lys-Gly) (interchain with G-Cter in ubiquitin) cross-links involve residues lysine 47, lysine 76, lysine 81, lysine 95, lysine 106, lysine 115, lysine 171, and lysine 177.

The protein belongs to the PTH2 family. Monomer. In terms of processing, ubiquitinated by PRKN during mitophagy, leading to its degradation and enhancement of mitophagy. Deubiquitinated by USP30.

The protein resides in the mitochondrion outer membrane. It catalyses the reaction an N-acyl-L-alpha-aminoacyl-tRNA + H2O = an N-acyl-L-amino acid + a tRNA + H(+). In terms of biological role, peptidyl-tRNA hydrolase which releases tRNAs from the ribosome during protein synthesis. Promotes caspase-independent apoptosis by regulating the function of two transcriptional regulators, AES and TLE1. The protein is Peptidyl-tRNA hydrolase 2, mitochondrial (PTRH2) of Homo sapiens (Human).